A 778-amino-acid chain; its full sequence is MLSARSAIKRPIVRGLATVSNLTRDSKVNQNLLEDHSFINYKQNVETLDIVRKRLNRPFTYAEKILYGHLDDPHGQDIQRGVSYLKLRPDRVACQDATAQMAILQFMSAGLPQVAKPVTVHCDHLIQAQVGGEKDLKRAIDLNKEVYDFLASATAKYNMGFWKPGSGIIHQIVLENYAFPGALIIGTDSHTPNAGGLGQLAIGVGGADAVDVMAGRPWELKAPKILGVKLTGKMNGWTSPKDIILKLAGITTVKGGTGKIVEYFGDGVDTFSATGMGTICNMGAEIGATTSVFPFNKSMIEYLEATGRGKIADFAKLYHKDLLSADKDAEYDEVVEIDLNTLEPYINGPFTPDLATPVSKMKEVAVANNWPLDVRVGLIGSCTNSSYEDMSRSASIVKDAAAHGLKSKTIFTVTPGSEQIRATIERDGQLETFKEFGGIVLANACGPCIGQWDRRDIKKGDKNTIVSSYNRNFTSRNDGNPQTHAFVASPELVTAFAIAGDLRFNPLTDKLKDKDGNEFMLKPPHGDGLPQRGYDAGENTYQAPPADRSTVEVKVSPTSDRLQLLKPFKPWDGKDAKDMPILIKAVGKTTTDHISMAGPWLKYRGHLENISNNYMIGAINAENKKANCVKNVYTGEYKGVPDTARDYRDQGIKWVVIGDENFGEGSSREHAALEPRFLGGFAIITKSFARIHETNLKKQGLLPLNFKNPADYDKINPDDRIDILGLAELAPGKPVTMRVHPKNGKPWDAVLTHTFNDEQIEWFKYGSALNKIKADEKK.

The transit peptide at 1–16 directs the protein to the mitochondrion; that stretch reads MLSARSAIKRPIVRGL. Substrate contacts are provided by residues Gln95 and 188–190; that span reads DSH. Cys382 is a [4Fe-4S] cluster binding site. Ser391 carries the phosphoserine modification. A Phosphothreonine modification is found at Thr409. Positions 445 and 448 each coordinate [4Fe-4S] cluster. 2 residues coordinate substrate: Arg471 and Arg476. Ser556 is modified (phosphoserine). Substrate-binding positions include Arg604 and 667-668; that span reads SR.

Belongs to the aconitase/IPM isomerase family. Monomer. Binds to mitochondrial DNA (mtDNA) and identified as component of mitochondrial nucleoids. [4Fe-4S] cluster is required as a cofactor.

Its subcellular location is the mitochondrion. It is found in the cytoplasm. The enzyme catalyses citrate = D-threo-isocitrate. It participates in carbohydrate metabolism; tricarboxylic acid cycle; isocitrate from oxaloacetate: step 2/2. Its activity is regulated as follows. Subject to catabolite regulation. In terms of biological role, catalyzes the isomerization of citrate to isocitrate via cis-aconitate, a step in the citric acid cycle. Can also provide minor contributions to the reversible dehydration of (R)-homocitrate to cis-homoaconitate, a step in the alpha-aminoadipate pathway for lysine biosynthesis. Also plays an essential role in mtDNA maintenance. May directly protect mtDNA from accumulation of point mutations and ssDNA breaks as a component of mitochondrial nucleoids, or by preventing accumulation of iron citrate thereby alleviating its detrimental effects in mitochondria. The sequence is that of Aconitate hydratase, mitochondrial from Saccharomyces cerevisiae (strain ATCC 204508 / S288c) (Baker's yeast).